A 723-amino-acid chain; its full sequence is Threonine--tRNA ligase, mitochondrial (723 aa).

Serine 57 bears the Phosphoserine mark. The 63-residue stretch at 64–126 folds into the TGS domain; the sequence is RAIKISLPEG…ETDCHLRFLT (63 aa).

It belongs to the class-II aminoacyl-tRNA synthetase family. As to quaternary structure, homodimer.

It is found in the mitochondrion matrix. The catalysed reaction is tRNA(Thr) + L-threonine + ATP = L-threonyl-tRNA(Thr) + AMP + diphosphate + H(+). Its function is as follows. Catalyzes the attachment of threonine to tRNA(Thr) in a two-step reaction: threonine is first activated by ATP to form Thr-AMP and then transferred to the acceptor end of tRNA(Thr). Also edits incorrectly charged tRNA(Thr) via its editing domain. The protein is Threonine--tRNA ligase, mitochondrial (Tars2) of Mus musculus (Mouse).